Here is a 184-residue protein sequence, read N- to C-terminus: Large ribosomal subunit protein uL6 (184 aa).

This sequence belongs to the universal ribosomal protein uL6 family. As to quaternary structure, part of the 50S ribosomal subunit.

This protein binds to the 23S rRNA, and is important in its secondary structure. It is located near the subunit interface in the base of the L7/L12 stalk, and near the tRNA binding site of the peptidyltransferase center. This Onion yellows phytoplasma (strain OY-M) protein is Large ribosomal subunit protein uL6.